A 392-amino-acid chain; its full sequence is L-rhamnonate dehydratase (392 aa).

His-22 and Arg-48 together coordinate substrate. 3 residues coordinate Mg(2+): Asp-214, Glu-240, and Glu-268. His-318 (proton acceptor) is an active-site residue. Glu-338 contributes to the substrate binding site.

The protein belongs to the mandelate racemase/muconate lactonizing enzyme family. RhamD subfamily. As to quaternary structure, homooctamer; tetramer of dimers. The cofactor is Mg(2+).

The catalysed reaction is L-rhamnonate = 2-dehydro-3-deoxy-L-rhamnonate + H2O. Its function is as follows. Catalyzes the dehydration of L-rhamnonate to 2-keto-3-deoxy-L-rhamnonate (KDR). This Burkholderia cenocepacia (strain HI2424) protein is L-rhamnonate dehydratase.